The following is a 463-amino-acid chain: Competence protein ComFA (463 aa).

Positions 60, 63, 84, and 87 each coordinate Zn(2+). The region spanning 133–285 (IEAISKKEEL…LNGQLHSVRI (153 aa)) is the Helicase ATP-binding domain. 146–153 (AVCGAGKT) contacts ATP. Residues 233–236 (DEVD) carry the DEAD box motif. In terms of domain architecture, Helicase C-terminal spans 317–463 (AVKRWIEFHV…ELAAKVECTD (147 aa)).

The protein belongs to the DEAD box helicase family. As to quaternary structure, monomer and dimer in solution. Interacts with DprA and ComFC; ComFA-ComFC form rings about 150 Angstroms in diameter with apparent 6-fold symmetry. Zn(2+) serves as cofactor.

The protein resides in the cytoplasm. In terms of biological role, involved in transformation (genetic competence for DNA uptake). Required for DNA uptake but not for DNA binding to cells. DNA uptake is energy dependent, this protein may provide the driving force for DNA uptake. Does not have helicase activity, translocates on single-stranded (ss)DNA in a 5'-3' direction in an ATP-dependent manner, but does not unwind double-stranded (ds)DNA. ATP hydrolysis causes the release of ssDNA from ComFA. A ssDNA-stimulated ATPase; dsDNA does not stimulate ATPase. ATP hydrolysis causes the release of ssDNA from ComFA. Binds ssDNA but only very poorly to dsDNA in the absence of ATP. Binding to ssDNA does not require free DNA ends. In Bacillus subtilis (strain 168), this protein is Competence protein ComFA.